The sequence spans 132 residues: MVMTDPIADFLTRIRNANMVKHETLEVPASKIKRDIAEILKREGFIRDVEYIEDDKQGVIRVFLKYGKNEERVITNLKRISKPGLRAYVKADEVPKVLNGLGIAIISTSEGVITDKEARAKNIGGEVIAYVW.

Belongs to the universal ribosomal protein uS8 family. As to quaternary structure, part of the 30S ribosomal subunit. Contacts proteins S5 and S12.

Functionally, one of the primary rRNA binding proteins, it binds directly to 16S rRNA central domain where it helps coordinate assembly of the platform of the 30S subunit. This Enterococcus faecalis (strain ATCC 700802 / V583) protein is Small ribosomal subunit protein uS8.